A 122-amino-acid chain; its full sequence is Large ribosomal subunit protein uL14c (122 aa).

Belongs to the universal ribosomal protein uL14 family. As to quaternary structure, part of the 50S ribosomal subunit.

The protein localises to the plastid. Its subcellular location is the chloroplast. In terms of biological role, binds to 23S rRNA. This chain is Large ribosomal subunit protein uL14c, found in Mesostigma viride (Green alga).